The primary structure comprises 906 residues: DNA mismatch repair protein MutS (906 aa).

Position 656–663 (656–663 (GPNMAGKS)) interacts with ATP.

The protein belongs to the DNA mismatch repair MutS family.

Functionally, this protein is involved in the repair of mismatches in DNA. It is possible that it carries out the mismatch recognition step. This protein has a weak ATPase activity. This chain is DNA mismatch repair protein MutS, found in Rhodopseudomonas palustris (strain BisA53).